We begin with the raw amino-acid sequence, 354 residues long: MASLATFQVENDIVDVDSTPQQGFDRDDLYKYDDVEQKAILAAHPWRTDPSYFRNVLVSSIALVKMAMHARSGGAIEVMGMMTGKILPNTFVVMDCYPLPVEGTETRVNAQQEGIEFMVEYLQGLKDVGRRENIVGWYHSHPGYGCWLSGIDVDTQFQNQQFQEPFLAVVVDPNRTISAGKVEIGAFRTYPKDYKPPKKATKQNQDQSVPLSKAKDYGAHSERYYELDVSFFKSSLDENLLQLLWNKNWAATLSQSTIQLNHDYTSKLMLDLSEKNAQLAIGLGEKTPQSQGRGFREAMSKADNEPHTNLLNYSTKGQWEAVNRSVKDGVQIGSDELQGLMSLEIQRRLFGRAK.

Positions 56 to 193 constitute an MPN domain; the sequence is VLVSSIALVK…IGAFRTYPKD (138 aa). His-139, His-141, and Asp-152 together coordinate Zn(2+). The short motif at 139 to 152 is the JAMM motif element; sequence HSHPGYGCWLSGID. The disordered stretch occupies residues 193-212; the sequence is DYKPPKKATKQNQDQSVPLS.

Belongs to the peptidase M67A family. CSN5 subfamily. In terms of assembly, component of the COP9 signalosome (CSN) complex.

The protein localises to the cytoplasm. It is found in the nucleus. In terms of biological role, catalytic Component of the COP9 signalosome (CSN) complex that acts as an regulator of the ubiquitin (Ubl) conjugation pathway by mediating the deneddylation of the cullin subunit of SCF-type E3 ubiquitin-protein ligase complexes. The polypeptide is COP9 signalosome complex subunit 5 (RRI1) (Yarrowia lipolytica (strain CLIB 122 / E 150) (Yeast)).